We begin with the raw amino-acid sequence, 424 residues long: Serine--tRNA ligase (424 aa).

230–232 (TAE) serves as a coordination point for L-serine. 261–263 (RSE) lines the ATP pocket. L-serine is bound at residue E284. Residue 348–351 (EISS) participates in ATP binding. S384 contributes to the L-serine binding site.

This sequence belongs to the class-II aminoacyl-tRNA synthetase family. Type-1 seryl-tRNA synthetase subfamily. As to quaternary structure, homodimer. The tRNA molecule binds across the dimer.

It localises to the cytoplasm. The catalysed reaction is tRNA(Ser) + L-serine + ATP = L-seryl-tRNA(Ser) + AMP + diphosphate + H(+). It catalyses the reaction tRNA(Sec) + L-serine + ATP = L-seryl-tRNA(Sec) + AMP + diphosphate + H(+). It participates in aminoacyl-tRNA biosynthesis; selenocysteinyl-tRNA(Sec) biosynthesis; L-seryl-tRNA(Sec) from L-serine and tRNA(Sec): step 1/1. Catalyzes the attachment of serine to tRNA(Ser). Is also able to aminoacylate tRNA(Sec) with serine, to form the misacylated tRNA L-seryl-tRNA(Sec), which will be further converted into selenocysteinyl-tRNA(Sec). This is Serine--tRNA ligase from Streptococcus pneumoniae (strain 70585).